A 425-amino-acid polypeptide reads, in one-letter code: Mothers against decapentaplegic homolog 3 (425 aa).

The residue at position 2 (Ser-2) is an N-acetylserine. A Phosphothreonine; by CDK2 and CDK4 modification is found at Thr-8. In terms of domain architecture, MH1 spans 10–136; it reads PIVKRLLGWK…YQRVETPVLP (127 aa). Lys-33 is covalently cross-linked (Glycyl lysine isopeptide (Lys-Gly) (interchain with G-Cter in ubiquitin)). Cys-64 provides a ligand contact to Zn(2+). Lys-81 participates in a covalent cross-link: Glycyl lysine isopeptide (Lys-Gly) (interchain with G-Cter in ubiquitin). Residues Cys-109, Cys-121, and His-126 each contribute to the Zn(2+) site. Residues 137–231 are linker; it reads PVLVPRHTEI…QPVTYCEPAF (95 aa). Residues 165-177 are compositionally biased toward polar residues; sequence NFPAGIEPQSNIP. Residues 165-208 form a disordered region; it reads NFPAGIEPQSNIPETPPPGYLSEDGETSDHQMNHSMDAGSPNLS. At Thr-179 the chain carries Phosphothreonine; by CDK2, CDK4 and MAPK. Ser-204 carries the post-translational modification Phosphoserine; by GSK3 and MAPK. At Ser-208 the chain carries Phosphoserine; by MAPK. Residue Ser-213 is modified to Phosphoserine; by CDK2 and CDK4. The MH2 domain occupies 232 to 425; sequence WCSISYYELN…SPSIRCSSVS (194 aa). The sufficient for interaction with XPO4 stretch occupies residues 271–324; it reads LGLLSNVNRNAAVELTRRHIGRGVRLYYIGGEVFAECLSDSAIFVQSPNCNQRY. Position 378 is an N6-acetyllysine (Lys-378). Ser-416 is subject to Phosphoserine. Residue Ser-418 is modified to Phosphoserine; by CK1. Phosphoserine; by TGFBR1 is present on residues Ser-422, Ser-423, and Ser-425.

It belongs to the dwarfin/SMAD family. In terms of assembly, monomer; in the absence of TGF-beta. Homooligomer; in the presence of TGF-beta. Heterotrimer; forms a heterotrimer in the presence of TGF-beta consisting of two molecules of C-terminally phosphorylated SMAD2 or SMAD3 and one of SMAD4 to form the transcriptionally active SMAD2/SMAD3-SMAD4 complex. Part of a complex consisting of MAGI2/ARIP1, ACVR2A, ACVR1B and SMAD3. Forms a complex with SMAD2 and TRIM33 upon addition of TGF-beta. Found in a complex composed of SMAD3, RAN and XPO4; within the complex interacts directly with XPO4. Component of the multimeric complex SMAD3/SMAD4/JUN/FOS which forms at the AP1 promoter site; required for synergistic transcriptional activity in response to TGF-beta. Part of a ternary complex composed of SMAD3, ITCH/AIP4 and NEDD9/HEF1; within the complex NEDD9/HEF1 interacts (via N-terminus) with ITCH/AIP4; the complex mediates ubiquitination and proteasomal degradation of NEDD9/HEF1. Interacts with NEDD9; the interaction promotes NEDD9 ubiquitination and proteasomal degradation. Interacts (via an N-terminal domain) with JUN (via its basic DNA binding and leucine zipper domains); this interaction is essential for DNA binding and cooperative transcriptional activity in response to TGF-beta. Identified in a complex that contains at least ZNF451, SMAD2, SMAD3 and SMAD4. Interacts with PPM1A; the interaction dephosphorylates SMAD3 in the C-terminal SXS motif leading to disruption of the SMAD2/3-SMAD4 complex, nuclear export and termination of TGF-beta signaling. Interacts (via MH2 domain) with ZMIZ1 (via SP-RING-type domain); in the TGF-beta signaling pathway increases the activity of the SMAD3/SMAD4 transcriptional complex. Interacts (when phosphorylated) with RNF111; RNF111 acts as an enhancer of the transcriptional responses by mediating ubiquitination and degradation of SMAD3 inhibitors. Interacts (dephosphorylated form via the MH1 and MH2 domains) with RANBP3 (via its C-terminal R domain); the interaction results in the export of dephosphorylated SMAD3 out of the nucleus and termination of the TGF-beta signaling. Interacts (via MH2 domain) with LEMD3; the interaction represses SMAD3 transcriptional activity through preventing the formation of the heteromeric complex with SMAD4 and translocation to the nucleus. Interacts (via the linker region) with EP300 (C-terminal); the interaction promotes SMAD3 acetylation and is enhanced by TGF-beta phosphorylation in the C-terminal of SMAD3. This interaction can be blocked by competitive binding of adenovirus oncoprotein E1A to the same C-terminal site on EP300, which then results in partially inhibited SMAD3/SMAD4 transcriptional activity. Interacts with TGFBR1. Interacts with TGFB1I1. Interacts with PRDM16. Interacts with SNW1. Interacts (via MH2 domain) with ZFYVE9. Interacts with HDAC1. Interacts with TGIF2. Interacts with SKOR1. Interacts with SKOR2. Interacts with DACH1; the interaction inhibits the TGF-beta signaling. Interacts with RBPMS. Interacts (via MH2 domain) with MECOM. Interacts with WWTR1 (via its coiled-coil domain). Interacts with SKI; the interaction represses SMAD3 transcriptional activity. Interacts with MEN1. Interacts with IL1F7. Interaction with CSNK1G2. Interacts with PDPK1 (via PH domain). Interacts with DAB2; the interactions are enhanced upon TGF-beta stimulation. Interacts with USP15. Interacts with PPP5C; the interaction decreases SMAD3 phosphorylation and protein levels. Interacts with LDLRAD4 (via the SMAD interaction motif). Interacts with PMEPA1. Interacts with ZNF451. Interacts with ZFHX3. Interacts weakly with ZNF8. Interacts with STUB1, HSPA1A, HSPA1B, HSP90AA1 and HSP90AB1. Interacts with YAP1 (when phosphorylated at 'Ser-55'). Interacts with MAGI2/ARIP1. Interacts (via MH2 domain) with CITED2 (via C-terminus). Interacts with HGS. Interacts with WWP1. Interacts with TTRAP. Interacts with FOXL2. Interacts with PML. Interacts with NEDD4L; the interaction requires TGF-beta stimulation. Interacts with ZC3H3. Interacts with TGIF. Interacts with CREBBP. Interacts with ATF2. Interacts with NEDD9; the interaction is inhibited by oxidation of NEDD9. Interacts with MTMR4; negatively regulates TGF-beta signaling through SMAD3 dephosphorylation and retention in endosomes. In terms of processing, phosphorylated on serine and threonine residues. Enhanced phosphorylation in the linker region on Thr-179, Ser-204 and Ser-208 on EGF and TGF-beta treatment. Ser-208 is the main site of MAPK-mediated phosphorylation. CDK-mediated phosphorylation occurs in a cell-cycle dependent manner and inhibits both the transcriptional activity and antiproliferative functions of SMAD3. This phosphorylation is inhibited by flavopiridol. Maximum phosphorylation at the G(1)/S junction. Also phosphorylated on serine residues in the C-terminal SXS motif by TGFBR1 and ACVR1. TGFBR1-mediated phosphorylation at these C-terminal sites is required for interaction with SMAD4, nuclear location and transactivational activity, and appears to be a prerequisite for the TGF-beta mediated phosphorylation in the linker region. Dephosphorylated in the C-terminal SXS motif by PPM1A. This dephosphorylation disrupts the interaction with SMAD4, promotes nuclear export and terminates TGF-beta-mediated signaling. Phosphorylation at Ser-418 by CSNK1G2/CK1 promotes ligand-dependent ubiquitination and subsequent proteasome degradation, thus inhibiting SMAD3-mediated TGF-beta responses. Phosphorylated by PDPK1. Post-translationally, acetylation in the nucleus by EP300 in the MH2 domain regulates positively its transcriptional activity and is enhanced by TGF-beta. Poly-ADP-ribosylated by PARP1 and PARP2. ADP-ribosylation negatively regulates SMAD3 transcriptional responses during the course of TGF-beta signaling. In terms of processing, ubiquitinated. Monoubiquitinated, leading to prevent DNA-binding. Deubiquitination by USP15 alleviates inhibition and promotes activation of TGF-beta target genes. Ubiquitinated by RNF111, leading to its degradation: only SMAD3 proteins that are 'in use' are targeted by RNF111, RNF111 playing a key role in activating SMAD3 and regulating its turnover. Undergoes STUB1-mediated ubiquitination and degradation. As to expression, highly expressed in the brain and ovary. Detected in the pyramidal cells of the hippocampus, granule cells of the dentate gyrus, granular cells of the cerebral cortex and the granulosa cells of the ovary.

The protein localises to the cytoplasm. It localises to the nucleus. Receptor-regulated SMAD (R-SMAD) that is an intracellular signal transducer and transcriptional modulator activated by TGF-beta (transforming growth factor) and activin type 1 receptor kinases. Binds the TRE element in the promoter region of many genes that are regulated by TGF-beta and, on formation of the SMAD3/SMAD4 complex, activates transcription. Also can form a SMAD3/SMAD4/JUN/FOS complex at the AP-1/SMAD site to regulate TGF-beta-mediated transcription. Has an inhibitory effect on wound healing probably by modulating both growth and migration of primary keratinocytes and by altering the TGF-mediated chemotaxis of monocytes. This effect on wound healing appears to be hormone-sensitive. Regulator of chondrogenesis and osteogenesis and inhibits early healing of bone fractures. Positively regulates PDPK1 kinase activity by stimulating its dissociation from the 14-3-3 protein YWHAQ which acts as a negative regulator. The polypeptide is Mothers against decapentaplegic homolog 3 (SMAD3) (Sus scrofa (Pig)).